A 216-amino-acid polypeptide reads, in one-letter code: MNYPHPLIAREGWPFLAGAFVISLLVHASAGFWWALPLWIITVFVLQFFRDPPRPIPSAPNAVLAPADGRIVVVEKTMDPYANREALKISVFMNVFNVHSNRVSVDGAVEKVEYFPGKFVNADLDKASTENERNAVVIRRAADGQVVTLVQVAGLVARRILCYTKAGENLSRGQRYGFIRFGSRVDVYLPLDARPRVTIGEKVSASSTILAELDVK.

Residue serine 183 is the Schiff-base intermediate with substrate; via pyruvic acid of the active site. A Pyruvic acid (Ser); by autocatalysis modification is found at serine 183.

It belongs to the phosphatidylserine decarboxylase family. PSD-A subfamily. In terms of assembly, heterodimer of a large membrane-associated beta subunit and a small pyruvoyl-containing alpha subunit. The cofactor is pyruvate. Post-translationally, is synthesized initially as an inactive proenzyme. Formation of the active enzyme involves a self-maturation process in which the active site pyruvoyl group is generated from an internal serine residue via an autocatalytic post-translational modification. Two non-identical subunits are generated from the proenzyme in this reaction, and the pyruvate is formed at the N-terminus of the alpha chain, which is derived from the carboxyl end of the proenzyme. The post-translation cleavage follows an unusual pathway, termed non-hydrolytic serinolysis, in which the side chain hydroxyl group of the serine supplies its oxygen atom to form the C-terminus of the beta chain, while the remainder of the serine residue undergoes an oxidative deamination to produce ammonia and the pyruvoyl prosthetic group on the alpha chain.

Its subcellular location is the cell membrane. The enzyme catalyses a 1,2-diacyl-sn-glycero-3-phospho-L-serine + H(+) = a 1,2-diacyl-sn-glycero-3-phosphoethanolamine + CO2. It functions in the pathway phospholipid metabolism; phosphatidylethanolamine biosynthesis; phosphatidylethanolamine from CDP-diacylglycerol: step 2/2. Its function is as follows. Catalyzes the formation of phosphatidylethanolamine (PtdEtn) from phosphatidylserine (PtdSer). The chain is Phosphatidylserine decarboxylase proenzyme from Cupriavidus taiwanensis (strain DSM 17343 / BCRC 17206 / CCUG 44338 / CIP 107171 / LMG 19424 / R1) (Ralstonia taiwanensis (strain LMG 19424)).